The primary structure comprises 144 residues: Large ribosomal subunit protein uL16 (144 aa).

It belongs to the universal ribosomal protein uL16 family. Part of the 50S ribosomal subunit.

Functionally, binds 23S rRNA and is also seen to make contacts with the A and possibly P site tRNAs. The chain is Large ribosomal subunit protein uL16 from Pediococcus pentosaceus (strain ATCC 25745 / CCUG 21536 / LMG 10740 / 183-1w).